Reading from the N-terminus, the 713-residue chain is F-box/WD repeat-containing protein 7 (713 aa).

The tract at residues 1 to 150 is disordered; it reads MNQELLSVGS…DEHTHNSNVT (150 aa). Residue Ser26 is modified to Phosphoserine. The span at 46–55 shows a compositional bias: basic and acidic residues; that stretch reads RHQEEEHTAR. A compositionally biased stretch (polar residues) spans 69–84; the sequence is QNDSQQGQVEENNNRF. The segment covering 87–135 has biased composition (acidic residues); the sequence is VDEDSSGNQEEQEEDEEHAGEQEEEEEEEEEEEEEEEMDQESDDFDQSD. A coiled-coil region spans residues 94 to 136; it reads NQEEQEEDEEHAGEQEEEEEEEEEEEEEEEMDQESDDFDQSDD. Residues 136 to 145 show a composition bias toward basic and acidic residues; that stretch reads DSSREDEHTH. A Phosphothreonine modification is found at Thr211. Phosphoserine is present on Ser233. In terms of domain architecture, F-box spans 284–330; it reads RDFISLLPKELALYVLSFLEPKDLLQAAQTCRYWRILAEDNLLWREK. WD repeat units lie at residues 384–424, 426–462, 465–504, 506–542, 545–584, 586–624, and 628–665; these read GHDD…RTLV, HTGG…CIHT, GHTS…HVLM, HVAA…CLHT, GHTN…HTLT, HQSL…QTLQ, and KHQS…FIRN.

In terms of assembly, homodimer; homodimerization plays a role in substrate binding and/or ubiquitination and degradation. Component of the SCF(FBXW7) complex consisting of CUL1, RBX1, SKP1 and FBXW7. Interacts (via F-box domain) with SKP1. Interacts (via F-box domain) with pseudophosphatase STYX; the interaction is direct and prevents FBXW7 interaction with SKP1. Interacts with cyclin-E (CCNE1 or CCNE2). Interacts with PSEN1. Forms a trimeric complex with NOTCH1 and SGK1. Interacts with NOTCH1 intracellular domain/NICD and NOTCH4 intracellular domain/NICD. Interacts with NOTCH2 intracellular domain (N2ICD). Interacts with MYC (when phosphorylated). Interacts with USP28, counteracting ubiquitination of MYC. Interacts (when phosphorylated at Thr-211) with PIN1, disrupting FBXW7 dimerization and promoting FBXW7 autoubiquitination and degradation. Interacts with UBE2QL1. Interacts with FAM83D; promotes FBXW7 degradation. Interacts with MYCN; FBXW7 competes with AURKA for binding to unphosphorylated MYCN but not for binding to phosphorylated MYCN. Interacts with JUN. Found in a complex with JUN and PRR7. Interacts with JUN and PRR7; the interaction inhibits ubiquitination-mediated JUN degradation, promoting its phosphorylation and transcriptional activity. Interacts with NFE2L1. Interacts with NR1D1. Interacts with RICTOR; mediates RICTOR ubiquitination and degradation. In terms of processing, phosphorylation at Thr-211 promotes interaction with PIN1, leading to disrupt FBXW7 dimerization and promoting FBXW7 autoubiquitination and degradation. Phosphorylated by ATM at Ser-26 in response to DNA damage, promoting recruitment to DNA damage sites and 'Lys-63'-linked ubiquitination of phosphorylated XRCC4. Ubiquitinated: autoubiquitinates following phosphorylation at Thr-211 and subsequent interaction with PIN1. Ubiquitination leads to its degradation.

It localises to the nucleus. The protein localises to the nucleoplasm. It is found in the chromosome. It functions in the pathway protein modification; protein ubiquitination. In terms of biological role, substrate recognition component of a SCF (SKP1-CUL1-F-box protein) E3 ubiquitin-protein ligase complex which mediates the ubiquitination and subsequent proteasomal degradation of target proteins. Recognizes and binds phosphorylated sites/phosphodegrons within target proteins and thereafter brings them to the SCF complex for ubiquitination. Identified substrates include cyclin-E (CCNE1 or CCNE2), JUN, MYC, NOTCH1 released notch intracellular domain (NICD), NOTCH2, MCL1, MLST8, RICTOR and probably PSEN1. Acts as a negative regulator of JNK signaling by binding to phosphorylated JUN and promoting its ubiquitination and subsequent degradation. SCF(FBXW7) complex mediates the ubiquitination and subsequent degradation of NFE2L1. Involved in bone homeostasis and negative regulation of osteoclast differentiation. Regulates the amplitude of the cyclic expression of hepatic core clock genes and genes involved in lipid and glucose metabolism via ubiquitination and proteasomal degradation of their transcriptional repressor NR1D1; CDK1-dependent phosphorylation of NR1D1 is necessary for SCF(FBXW7)-mediated ubiquitination. Also able to promote 'Lys-63'-linked ubiquitination in response to DNA damage. The SCF(FBXW7) complex facilitates double-strand break repair following phosphorylation by ATM: phosphorylation promotes localization to sites of double-strand breaks and 'Lys-63'-linked ubiquitination of phosphorylated XRCC4, enhancing DNA non-homologous end joining. The protein is F-box/WD repeat-containing protein 7 of Rattus norvegicus (Rat).